An 813-amino-acid polypeptide reads, in one-letter code: ATP-dependent zinc metalloprotease FTSH 10, mitochondrial (813 aa).

Residues 1 to 86 (MIFSKLGSSL…FANPRLRRFF (86 aa)) constitute a mitochondrion transit peptide. The disordered stretch occupies residues 93–129 (KKNYENYYPKDSKKAPKNEQKSESRDGSKKNENENAG). Over residues 94 to 125 (KNYENYYPKDSKKAPKNEQKSESRDGSKKNEN) the composition is skewed to basic and acidic residues. A helical transmembrane segment spans residues 139-157 (MLIPLMAIALILSTFSLGS). Position 367–374 (367–374 (GPPGTGKT)) interacts with ATP. His-592 provides a ligand contact to Zn(2+). Glu-593 is a catalytic residue. Zn(2+) contacts are provided by His-596 and Asp-668. Basic and acidic residues predominate over residues 764–790 (RPFKSGETTNYDRFKSGFEESEKESQK). The interval 764–813 (RPFKSGETTNYDRFKSGFEESEKESQKESVPVKPVEDDGIPPLEPQVVPT) is disordered.

This sequence in the N-terminal section; belongs to the AAA ATPase family. It in the C-terminal section; belongs to the peptidase M41 family. It depends on Zn(2+) as a cofactor.

The protein localises to the mitochondrion inner membrane. Functionally, probable ATP-dependent zinc metallopeptidase. Involved in the assembly and/or stability of the complexes I and V of the mitochondrial oxidative phosphorylation system. This is ATP-dependent zinc metalloprotease FTSH 10, mitochondrial (FTSH10) from Arabidopsis thaliana (Mouse-ear cress).